The primary structure comprises 337 residues: Transaldolase (337 aa).

A Nuclear localization signal motif is present at residues 1 to 10; the sequence is MSGSPVKRQR. Lys-115 carries the post-translational modification N6-acetyllysine. Lys-142 (schiff-base intermediate with substrate) is an active-site residue. Lys-219 carries the N6-acetyllysine modification. 2 positions are modified to phosphoserine: Ser-237 and Ser-256. An N6-acetyllysine mark is found at Lys-269, Lys-286, and Lys-321.

The protein belongs to the transaldolase family. Type 1 subfamily. As to quaternary structure, homodimer. Interacts with KPNA1 and KPNA4.

It localises to the nucleus. The protein resides in the cytoplasm. It catalyses the reaction D-sedoheptulose 7-phosphate + D-glyceraldehyde 3-phosphate = D-erythrose 4-phosphate + beta-D-fructose 6-phosphate. It participates in carbohydrate degradation; pentose phosphate pathway; D-glyceraldehyde 3-phosphate and beta-D-fructose 6-phosphate from D-ribose 5-phosphate and D-xylulose 5-phosphate (non-oxidative stage): step 2/3. Functionally, catalyzes the rate-limiting step of the non-oxidative phase in the pentose phosphate pathway. Catalyzes the reversible conversion of sedheptulose-7-phosphate and D-glyceraldehyde 3-phosphate into erythrose-4-phosphate and beta-D-fructose 6-phosphate. The chain is Transaldolase (Taldo1) from Rattus norvegicus (Rat).